The sequence spans 148 residues: Large ribosomal subunit protein uL22 (148 aa).

The protein belongs to the universal ribosomal protein uL22 family. In terms of assembly, part of the 50S ribosomal subunit.

Functionally, this protein binds specifically to 23S rRNA; its binding is stimulated by other ribosomal proteins, e.g. L4, L17, and L20. It is important during the early stages of 50S assembly. It makes multiple contacts with different domains of the 23S rRNA in the assembled 50S subunit and ribosome. In terms of biological role, the globular domain of the protein is located near the polypeptide exit tunnel on the outside of the subunit, while an extended beta-hairpin is found that lines the wall of the exit tunnel in the center of the 70S ribosome. The chain is Large ribosomal subunit protein uL22 from Thermosipho africanus (strain TCF52B).